The sequence spans 239 residues: Small ribosomal subunit protein uS3 (239 aa).

A KH type-2 domain is found at 39-107 (IREFIKEECK…ELHLNIVEVR (69 aa)). Residues 212–221 (PQARDRKAQE) show a composition bias toward basic and acidic residues. Residues 212-239 (PQARDRKAQELQDGPAPRGAGGNRRGDR) form a disordered region. Residues 230 to 239 (GAGGNRRGDR) are compositionally biased toward gly residues.

The protein belongs to the universal ribosomal protein uS3 family. In terms of assembly, part of the 30S ribosomal subunit. Forms a tight complex with proteins S10 and S14.

In terms of biological role, binds the lower part of the 30S subunit head. Binds mRNA in the 70S ribosome, positioning it for translation. This Ruegeria sp. (strain TM1040) (Silicibacter sp.) protein is Small ribosomal subunit protein uS3.